Consider the following 260-residue polypeptide: Thiazole synthase (260 aa).

Lys-102 functions as the Schiff-base intermediate with DXP in the catalytic mechanism. 1-deoxy-D-xylulose 5-phosphate is bound by residues Gly-163, 189 to 190, and 211 to 212; these read AG and NT.

It belongs to the ThiG family. In terms of assembly, homotetramer. Forms heterodimers with either ThiH or ThiS.

It localises to the cytoplasm. It catalyses the reaction [ThiS sulfur-carrier protein]-C-terminal-Gly-aminoethanethioate + 2-iminoacetate + 1-deoxy-D-xylulose 5-phosphate = [ThiS sulfur-carrier protein]-C-terminal Gly-Gly + 2-[(2R,5Z)-2-carboxy-4-methylthiazol-5(2H)-ylidene]ethyl phosphate + 2 H2O + H(+). The protein operates within cofactor biosynthesis; thiamine diphosphate biosynthesis. In terms of biological role, catalyzes the rearrangement of 1-deoxy-D-xylulose 5-phosphate (DXP) to produce the thiazole phosphate moiety of thiamine. Sulfur is provided by the thiocarboxylate moiety of the carrier protein ThiS. In vitro, sulfur can be provided by H(2)S. This Geobacter sulfurreducens (strain ATCC 51573 / DSM 12127 / PCA) protein is Thiazole synthase.